A 339-amino-acid polypeptide reads, in one-letter code: Lipoate-protein ligase A (339 aa).

Residues 29-216 form the BPL/LPL catalytic domain; that stretch reads DPSQQVLFLW…SFENFYAGKA (188 aa). Residues Arg-71, 76-79, and Lys-134 each bind ATP; that span reads GAVF. Lys-134 serves as a coordination point for (R)-lipoate.

The protein belongs to the LplA family. As to quaternary structure, monomer.

The protein resides in the cytoplasm. It carries out the reaction L-lysyl-[lipoyl-carrier protein] + (R)-lipoate + ATP = N(6)-[(R)-lipoyl]-L-lysyl-[lipoyl-carrier protein] + AMP + diphosphate + H(+). It functions in the pathway protein modification; protein lipoylation via exogenous pathway; protein N(6)-(lipoyl)lysine from lipoate: step 1/2. It participates in protein modification; protein lipoylation via exogenous pathway; protein N(6)-(lipoyl)lysine from lipoate: step 2/2. Catalyzes both the ATP-dependent activation of exogenously supplied lipoate to lipoyl-AMP and the transfer of the activated lipoyl onto the lipoyl domains of lipoate-dependent enzymes. The polypeptide is Lipoate-protein ligase A (Bdellovibrio bacteriovorus (strain ATCC 15356 / DSM 50701 / NCIMB 9529 / HD100)).